Reading from the N-terminus, the 138-residue chain is uncharacterized protein (138 aa).

The signal sequence occupies residues 1-37; the sequence is MNSTFTSQPLLNRSEPRVFKEFYRLVIGCNPAWQVMA.

It to H.influenzae HI_1631.

This is an uncharacterized protein from Sinorhizobium fredii (strain NBRC 101917 / NGR234).